We begin with the raw amino-acid sequence, 1395 residues long: DNA-directed RNA polymerase subunit beta' (1395 aa).

4 residues coordinate Zn(2+): C70, C72, C85, and C88. Positions 461, 463, and 465 each coordinate Mg(2+). Residues C815, C889, C896, and C899 each coordinate Zn(2+).

Belongs to the RNA polymerase beta' chain family. The RNAP catalytic core consists of 2 alpha, 1 beta, 1 beta' and 1 omega subunit. When a sigma factor is associated with the core the holoenzyme is formed, which can initiate transcription. Mg(2+) serves as cofactor. Zn(2+) is required as a cofactor.

It carries out the reaction RNA(n) + a ribonucleoside 5'-triphosphate = RNA(n+1) + diphosphate. In terms of biological role, DNA-dependent RNA polymerase catalyzes the transcription of DNA into RNA using the four ribonucleoside triphosphates as substrates. The sequence is that of DNA-directed RNA polymerase subunit beta' from Ruthia magnifica subsp. Calyptogena magnifica.